The following is a 315-amino-acid chain: MAELACFCYPCDREGASVARYSRSAIKCMLSAKIDKSHSSQPYDTQVYGLAPPPVYKKRFNDGNNSRGMNFDTDMYDKVADLLVQILNGIKIGKDKAAEIMAVPISVRHLENLIYRIENKDDILSADPNLITKSVLIAMGLIKDCELTTTAEGGDIVFQNQGFTMWRLDYKSHVLMPITDPNFVEYKITLNHTNPIDDKIVKELVAELRWQYNKFAVITHGKGHYRVVRYSTVANHADRVYSTFKSIQKRNPSYKFNELDTRVIWTNWAAFVKSMLNGMKLDDSKRLLFTKMKPNESSFKGVTTERKLDEVSLLG.

ATP-binding positions include 106–108, lysine 187, and 220–222; these read SVR and HGK. Positions 204-240 are RNA-binding; that stretch reads LVAELRWQYNKFAVITHGKGHYRVVRYSTVANHADRV. Catalysis depends on histidine 224, which acts as the For NTPase and RTPase activities. An ATP-binding site is contributed by arginine 226.

It belongs to the rotavirus NSP2 family. As to quaternary structure, homooctamer. Interacts with VP1; this interaction is weak. Interacts with NSP5; this interaction leads to up-regulation of NSP5 phosphorylation and formation of viral factories. Interacts with host DCP1A, DCP1B, DDX6, EDC4 and EIF2S1/eIF2-alpha; these interactions are probably part of the sequestration of some host SGs and PBs proteins in viral factories. Mg(2+) is required as a cofactor.

It localises to the host cytoplasm. Functionally, participates in replication and packaging of the viral genome. Plays a crucial role, together with NSP5, in the formation of virus factories (viroplasms), which are large inclusions in the host cytoplasm where replication intermediates are assembled and viral RNA replication takes place. Displays ssRNA binding, NTPase, RNA triphosphatase (RTPase) and ATP-independent helix-unwinding activities. The unwinding activity may prepare and organize plus-strand RNAs for packaging and replication by removing interfering secondary structures. The RTPase activity plays a role in the removal of the gamma-phosphate from the rotavirus RNA minus strands of dsRNA genome segments. Participates in the selective exclusion of host proteins from stress granules (SG) and P bodies (PB). Also participates in the sequestration of these remodeled organelles in viral factories. The protein is Non-structural protein 2 of Aves (RV-A).